The chain runs to 491 residues: Glutamyl-tRNA(Gln) amidotransferase subunit A (491 aa).

Catalysis depends on charge relay system residues K81 and S156. The active-site Acyl-ester intermediate is the S180.

The protein belongs to the amidase family. GatA subfamily. Heterotrimer of A, B and C subunits.

It catalyses the reaction L-glutamyl-tRNA(Gln) + L-glutamine + ATP + H2O = L-glutaminyl-tRNA(Gln) + L-glutamate + ADP + phosphate + H(+). Functionally, allows the formation of correctly charged Gln-tRNA(Gln) through the transamidation of misacylated Glu-tRNA(Gln) in organisms which lack glutaminyl-tRNA synthetase. The reaction takes place in the presence of glutamine and ATP through an activated gamma-phospho-Glu-tRNA(Gln). The sequence is that of Glutamyl-tRNA(Gln) amidotransferase subunit A from Alcanivorax borkumensis (strain ATCC 700651 / DSM 11573 / NCIMB 13689 / SK2).